Here is a 75-residue protein sequence, read N- to C-terminus: UPF0291 protein lin1342 (75 aa).

A disordered region spans residues 55–75 (IDPKGNDVTPHKIKQMRKNKK). Over residues 65–75 (HKIKQMRKNKK) the composition is skewed to basic residues.

This sequence belongs to the UPF0291 family.

The protein localises to the cytoplasm. This is UPF0291 protein lin1342 from Listeria innocua serovar 6a (strain ATCC BAA-680 / CLIP 11262).